A 394-amino-acid chain; its full sequence is Candidapepsin (394 aa).

The first 23 residues, 1–23, serve as a signal peptide directing secretion; the sequence is MATIFLFTKNVFIALAFALFAQG. Positions 24-60 are cleaved as a propeptide — activation peptide; it reads LTIPDGIEKRTDKVVSLDFTVIRKPFNATAHRLIQKR. An N-linked (GlcNAc...) asparagine glycan is attached at N50. Residues 74–381 form the Peptidase A1 domain; sequence YAADIVVGSN…DLDDKTISLA (308 aa). Residue D92 is part of the active site. A disulfide bond links C107 and C119. Residue D278 is part of the active site. The cysteines at positions 314 and 347 are disulfide-linked.

Belongs to the peptidase A1 family. Post-translationally, O-glycosylated.

Its subcellular location is the secreted. The enzyme catalyses Preferential cleavage at the carboxyl of hydrophobic amino acids, but fails to cleave 15-Leu-|-Tyr-16, 16-Tyr-|-Leu-17 and 24-Phe-|-Phe-25 of insulin B chain. Activates trypsinogen, and degrades keratin.. The polypeptide is Candidapepsin (SAPT1) (Candida tropicalis (Yeast)).